We begin with the raw amino-acid sequence, 459 residues long: tRNA modification GTPase MnmE (459 aa).

(6S)-5-formyl-5,6,7,8-tetrahydrofolate contacts are provided by arginine 22, glutamate 85, and arginine 124. The TrmE-type G domain occupies 221-380 (GLSTVIVGKP…LEIQIRDLFF (160 aa)). Residue asparagine 231 participates in K(+) binding. GTP is bound by residues 231–236 (NVGKSS), 250–256 (TEVAGTT), and 275–278 (DTAG). Serine 235 contacts Mg(2+). The K(+) site is built by threonine 250, valine 252, and threonine 255. Threonine 256 lines the Mg(2+) pocket. (6S)-5-formyl-5,6,7,8-tetrahydrofolate is bound at residue lysine 459.

It belongs to the TRAFAC class TrmE-Era-EngA-EngB-Septin-like GTPase superfamily. TrmE GTPase family. Homodimer. Heterotetramer of two MnmE and two MnmG subunits. K(+) serves as cofactor.

Its subcellular location is the cytoplasm. Its function is as follows. Exhibits a very high intrinsic GTPase hydrolysis rate. Involved in the addition of a carboxymethylaminomethyl (cmnm) group at the wobble position (U34) of certain tRNAs, forming tRNA-cmnm(5)s(2)U34. This chain is tRNA modification GTPase MnmE, found in Staphylococcus aureus (strain USA300 / TCH1516).